Here is a 501-residue protein sequence, read N- to C-terminus: Phytoene desaturase (lycopene-forming) (501 aa).

12 to 45 is an FAD binding site; sequence IVIGAGFGGLALAIRLQSAGIATTLVEARDKPGG.

This sequence belongs to the carotenoid/retinoid oxidoreductase family. FAD is required as a cofactor.

It carries out the reaction 15-cis-phytoene + 4 A = all-trans-lycopene + 4 AH2. Its pathway is carotenoid biosynthesis; astaxanthin biosynthesis. Functionally, this enzyme converts phytoene into lycopene via the intermediaries of phytofluene, zeta-carotene and neurosporene by the introduction of four double bonds. The polypeptide is Phytoene desaturase (lycopene-forming) (crtI) (Paracoccus sp. (strain N81106 / MBIC 01143) (Agrobacterium aurantiacum)).